Here is a 169-residue protein sequence, read N- to C-terminus: 2-C-methyl-D-erythritol 2,4-cyclodiphosphate synthase (169 aa).

A divalent metal cation is bound by residues Asp-13 and His-15. Residues 13-15 and 39-40 contribute to the 4-CDP-2-C-methyl-D-erythritol 2-phosphate site; these read DVH and HS. A divalent metal cation is bound at residue His-47. 4-CDP-2-C-methyl-D-erythritol 2-phosphate is bound by residues 61–63, 66–70, Phe-144, and Arg-147; these read DIG and FPDTD.

This sequence belongs to the IspF family. In terms of assembly, homotrimer. Requires a divalent metal cation as cofactor.

The enzyme catalyses 4-CDP-2-C-methyl-D-erythritol 2-phosphate = 2-C-methyl-D-erythritol 2,4-cyclic diphosphate + CMP. The protein operates within isoprenoid biosynthesis; isopentenyl diphosphate biosynthesis via DXP pathway; isopentenyl diphosphate from 1-deoxy-D-xylulose 5-phosphate: step 4/6. Involved in the biosynthesis of isopentenyl diphosphate (IPP) and dimethylallyl diphosphate (DMAPP), two major building blocks of isoprenoid compounds. Catalyzes the conversion of 4-diphosphocytidyl-2-C-methyl-D-erythritol 2-phosphate (CDP-ME2P) to 2-C-methyl-D-erythritol 2,4-cyclodiphosphate (ME-CPP) with a corresponding release of cytidine 5-monophosphate (CMP). In Cupriavidus necator (strain ATCC 17699 / DSM 428 / KCTC 22496 / NCIMB 10442 / H16 / Stanier 337) (Ralstonia eutropha), this protein is 2-C-methyl-D-erythritol 2,4-cyclodiphosphate synthase.